The following is a 151-amino-acid chain: Non-specific lipid transfer protein GPI-anchored 30 (151 aa).

The N-terminal stretch at 1–22 (MMMGMKFFSFYVVLLLVAASSG) is a signal peptide. 4 cysteine pairs are disulfide-bonded: Cys-32–Cys-69, Cys-39–Cys-53, Cys-54–Cys-97, and Cys-67–Cys-106. Residue Asn-44 is glycosylated (N-linked (GlcNAc...) asparagine). Ser-120 is lipidated: GPI-anchor amidated serine. Positions 121–151 (SSIGNTFSQSYWMTTLAIAATVLSYCHHIIS) are cleaved as a propeptide — removed in mature form.

It belongs to the plant LTP family. As to expression, expressed in vascular tissues of all organs. Expressed in seedlings, preferentially in hypocotyls and roots. Also observed in siliques.

It is found in the cell membrane. In terms of biological role, lipid transfer protein that promotes the number of phloem (pro)cambial and pericycle cells. The chain is Non-specific lipid transfer protein GPI-anchored 30 from Arabidopsis thaliana (Mouse-ear cress).